A 459-amino-acid polypeptide reads, in one-letter code: Bifunctional protein GlmU (459 aa).

The interval 1–229 (MLTQEIIIVI…YEEILGINNK (229 aa)) is pyrophosphorylase. Residues 11–14 (LAAG), Lys-25, Gln-76, 81–82 (GT), 103–105 (YGD), Gly-140, Glu-154, and Asn-227 each bind UDP-N-acetyl-alpha-D-glucosamine. Asp-105 serves as a coordination point for Mg(2+). Asn-227 contacts Mg(2+). A linker region spans residues 230–250 (LQLSNLEKIFQKKQINKLLIN). The N-acetyltransferase stretch occupies residues 251-459 (GVTIKDPSHF…MRSKKIIKKN (209 aa)). UDP-N-acetyl-alpha-D-glucosamine contacts are provided by Arg-333 and Lys-351. His-363 acts as the Proton acceptor in catalysis. Tyr-366 and Asn-377 together coordinate UDP-N-acetyl-alpha-D-glucosamine. Acetyl-CoA is bound by residues Ala-380, 386–387 (NY), Ser-405, and Ala-423.

This sequence in the N-terminal section; belongs to the N-acetylglucosamine-1-phosphate uridyltransferase family. In the C-terminal section; belongs to the transferase hexapeptide repeat family. In terms of assembly, homotrimer. Requires Mg(2+) as cofactor.

It is found in the cytoplasm. The catalysed reaction is alpha-D-glucosamine 1-phosphate + acetyl-CoA = N-acetyl-alpha-D-glucosamine 1-phosphate + CoA + H(+). The enzyme catalyses N-acetyl-alpha-D-glucosamine 1-phosphate + UTP + H(+) = UDP-N-acetyl-alpha-D-glucosamine + diphosphate. It participates in nucleotide-sugar biosynthesis; UDP-N-acetyl-alpha-D-glucosamine biosynthesis; N-acetyl-alpha-D-glucosamine 1-phosphate from alpha-D-glucosamine 6-phosphate (route II): step 2/2. The protein operates within nucleotide-sugar biosynthesis; UDP-N-acetyl-alpha-D-glucosamine biosynthesis; UDP-N-acetyl-alpha-D-glucosamine from N-acetyl-alpha-D-glucosamine 1-phosphate: step 1/1. It functions in the pathway bacterial outer membrane biogenesis; LPS lipid A biosynthesis. In terms of biological role, catalyzes the last two sequential reactions in the de novo biosynthetic pathway for UDP-N-acetylglucosamine (UDP-GlcNAc). The C-terminal domain catalyzes the transfer of acetyl group from acetyl coenzyme A to glucosamine-1-phosphate (GlcN-1-P) to produce N-acetylglucosamine-1-phosphate (GlcNAc-1-P), which is converted into UDP-GlcNAc by the transfer of uridine 5-monophosphate (from uridine 5-triphosphate), a reaction catalyzed by the N-terminal domain. The polypeptide is Bifunctional protein GlmU (Buchnera aphidicola subsp. Acyrthosiphon pisum (strain 5A)).